The chain runs to 269 residues: Imidazoleglycerol-phosphate dehydratase 2, chloroplastic (269 aa).

The N-terminal 51 residues, 1 to 51 (MTTAPFLFPSLSRLHSARASSFPKPPVGSGAGVAFPARPYGSSLRLRSSVM), are a transit peptide targeting the chloroplast. Substrate is bound by residues E83, 109–117 (HMLDQLASH), 135–139 (HHSNE), R161, and R183. The Mn(2+) site is built by H109, H135, H136, and E139. Positions 207, 231, 232, and 235 each coordinate Mn(2+). Residues 231-239 (HHIIEATFK) and 261-263 (SSK) each bind substrate.

Belongs to the imidazoleglycerol-phosphate dehydratase family. Mn(2+) is required as a cofactor.

The protein resides in the plastid. It is found in the chloroplast. It carries out the reaction D-erythro-1-(imidazol-4-yl)glycerol 3-phosphate = 3-(imidazol-4-yl)-2-oxopropyl phosphate + H2O. It functions in the pathway amino-acid biosynthesis; L-histidine biosynthesis; L-histidine from 5-phospho-alpha-D-ribose 1-diphosphate: step 6/9. The protein is Imidazoleglycerol-phosphate dehydratase 2, chloroplastic of Triticum aestivum (Wheat).